The primary structure comprises 1938 residues: MSSDQEMAIFGEAAPYLRKSEKERIEAQNKPFDAKTSVFVADPKESFVKATVQSREGGKVTAKTEAGATVTVKEDQCFPMNPPKYDKIEDMAMMTHLHEPAVLYNLKERYAAWMIYTYSGLFCVTVNPYKWLPVYNAEVVTAYRGKKRQEAPPHIFSISDNAYQFMLTDRENQSILITGESGAGKTVNTKRVIQYFATIAVTGEKKKEEPTSGKMQGTLEDQIISANPLLEAFGNAKTVRNDNSSRFGKFIRIHFGTTGKLASADIETYLLEKSRVTFQLKAERSYHIFYQIMSNKKPDLIEMLLITTNPYDYAFVSQGEITVPSIDDQEELMATDSAIEILGFTSDERVSIYKLTGAVMHYGNLKFKQKQREEQAEPDGTEVADKAAYLQGLNSADLLKALCYPRVKVGNEFVTKGQTVEQVYNAVGALAKAVYDKMFLWMVARINQQLDTKQPRQYFIGVLDIAGFEIFDFNSLEQLCINFTNEKLQQFFNHHMFVLEQEEYKKEGIEWEFIDFGMDLAACIELIEKPMGIFSILEEECMFPKATDTSFKNKLYEQHLGKSNNFQKPKPVKGKPEAHFSLIHYAGTVDYNITGWLDKNKDPLNETVVGLYQKSSVKTLALLFSGPASADAEAGGKKGGKKKGSSFQTVSALFRENLNKLMTNLRSTHPHFVRCIIPNETKTPGAMEHELVLHQLRCNGVLEGIRICRKGFPSRILYADFKQRYKVLNASAIPEGQFIDSKKASEKLLGSIDIDHTQYKFGHTKVFFKAGLLGLLEEMRDDKLAQIITRTQARCRGFLARVEYQRMVERRESIFCIQYNVRAFMNVKHWPWMKLYFKIKPLLKSAETEKEMANMKEEFEKTKESLAKAEAKRKELEEKMVALMQEKNDLQLQVQAEADSLADAEERCDQLIKTKIQLEAKIKEATERAEDEEEINAELTAKKRKLEDECSELKKDIDDLELTLAKVEKEKHATENKVKNLTEEMAGLDETIAKLTKEKKALQEAHQQTLDDLQAEEDKVNTLTKAKTKLEQQVDDLEGSLEQEKKLRMDLERAKRKLEGDLKLAQESTMDIENDKQQLDEKLKKKEFEMSNLQSKIEDEQALAMQLQKKIKELQARIEELEEEIEAERASRAKAEKQRSDLSRELEEISERLEEAGGATSAQIEMNKKREAEFQKMRRDLEEATLQHEATAAALRKKHADSVAELGEQIDNLQRVKQKLEKEKSEMKMEIDDLASNMETVSKAKGNLEKMCRTLEDQLSELKSKEEEQQRLVNDLTGQRARLQTEAGEYSRQLDEKDSLVSQLSRGKQAFTQQIEELKRQLEEEIKAKSALAHALQSARHDCDLLREQYEEEQEAKAELQRAMSKANSEVAQWRTKYETDAIQRTEELEEAKKKLAQRLQDAEEHVEAVNAKCASLEKTKQRLQNEVEDLMIDVERTNAACAALDKKQRNFDKILSEWKHKYEETHAELEASQKESRSLSTELFKVKNAYEESLDQLETLKRENKNLQQEISDLTEQIAEGGKRIHELEKVKKQIEQEKSEIQAALEEAEASLEHEEGKILRIQLELNQVKSEIDRKIAEKDEEIDQLKRNHVRVVETMQTMLDAEIRSRNDAIRIKKKMEGDLNEMEIQLNHANRMAAEALRNYRNTQGILKDTQLHLDDALRGQEDLKEQLAMVERRANLLQAEIEELRATLEQTERSRKIAEQELLDASERVQLLHTQNTSLINTKKKLETDISQLQGEMEDIVQEAHNAEEKAKKAITDAAMMAEELKKEQDTSAHLERMKKNLEQTVKDLQHRLDEAEQLALKGGKKQIQKLEARVRDLEGEVESEQKRNVEAVKGLRKHERRVKELTYQTEEDRKNILRLQDLVDKLQSKVKAYKRQAEEAEEQSNVNLSKFRKIQHELEEAEERADIAESQVNKLRVKSREVHTKIISEE.

Residues 33–82 enclose the Myosin N-terminal SH3-like domain; that stretch reads DAKTSVFVADPKESFVKATVQSREGGKVTAKTEAGATVTVKEDQCFPMNP. Thr-64 and Thr-69 each carry phosphothreonine. The 696-residue stretch at 86 to 781 folds into the Myosin motor domain; it reads DKIEDMAMMT…LLGLLEEMRD (696 aa). Lys-130 bears the N6,N6,N6-trimethyllysine mark. 179-186 lines the ATP pocket; that stretch reads GESGAGKT. Tyr-389 is subject to Phosphotyrosine. At Thr-419 the chain carries Phosphothreonine. Tyr-424 is subject to Phosphotyrosine. Ser-625 carries the post-translational modification Phosphoserine. The interval 658 to 680 is actin-binding; it reads LNKLMTNLRSTHPHFVRCIIPNE. His-756 carries the pros-methylhistidine modification. The actin-binding stretch occupies residues 760–774; the sequence is KFGHTKVFFKAGLLG. The region spanning 784-813 is the IQ domain; it reads LAQIITRTQARCRGFLARVEYQRMVERRES. A coiled-coil region spans residues 842 to 1938; sequence LLKSAETEKE…EVHTKIISEE (1097 aa). Residues Ser-1091 and Ser-1095 each carry the phosphoserine modification. Disordered regions lie at residues 1124–1146 and 1152–1171; these read EIEA…SREL and RLEE…KKRE. Residues 1127 to 1146 show a composition bias toward basic and acidic residues; it reads AERASRAKAEKQRSDLSREL. Phosphoserine is present on residues Ser-1161 and Ser-1236. Thr-1240 is subject to Phosphothreonine. Ser-1242 carries the phosphoserine modification. At Thr-1254 the chain carries Phosphothreonine. At Ser-1260 the chain carries Phosphoserine. Thr-1285 is subject to Phosphothreonine. 3 positions are modified to phosphoserine: Ser-1291, Ser-1302, and Ser-1305. Position 1463 is a phosphotyrosine (Tyr-1463). Thr-1466 carries the post-translational modification Phosphothreonine. Residue Ser-1473 is modified to Phosphoserine. Tyr-1491 is modified (phosphotyrosine). Ser-1494 bears the Phosphoserine mark. Thr-1500 is modified (phosphothreonine). Phosphoserine is present on Ser-1513. Thr-1516 carries the phosphothreonine modification. A phosphoserine mark is found at Ser-1541, Ser-1553, Ser-1573, Ser-1713, and Ser-1725. Phosphothreonine is present on residues Thr-1729 and Thr-1735. Ser-1738 is subject to Phosphoserine.

Belongs to the TRAFAC class myosin-kinesin ATPase superfamily. Myosin family. Muscle myosin is a hexameric protein that consists of 2 heavy chain subunits (MHC), 2 alkali light chain subunits (MLC) and 2 regulatory light chain subunits (MLC-2). Interacts with SLC26A5.

It is found in the cytoplasm. It localises to the myofibril. Required for normal hearing. It plays a role in cochlear amplification of auditory stimuli, likely through the positive regulation of prestin (SLC26A5) activity and outer hair cell (OHC) electromotility. The sequence is that of Myosin-1 (MYH1) from Equus caballus (Horse).